Reading from the N-terminus, the 488-residue chain is Glutamyl-tRNA(Gln) amidotransferase subunit A (488 aa).

Active-site charge relay system residues include Lys-77 and Ser-152. Ser-176 (acyl-ester intermediate) is an active-site residue.

Belongs to the amidase family. GatA subfamily. In terms of assembly, heterotrimer of A, B and C subunits.

The catalysed reaction is L-glutamyl-tRNA(Gln) + L-glutamine + ATP + H2O = L-glutaminyl-tRNA(Gln) + L-glutamate + ADP + phosphate + H(+). Functionally, allows the formation of correctly charged Gln-tRNA(Gln) through the transamidation of misacylated Glu-tRNA(Gln) in organisms which lack glutaminyl-tRNA synthetase. The reaction takes place in the presence of glutamine and ATP through an activated gamma-phospho-Glu-tRNA(Gln). This is Glutamyl-tRNA(Gln) amidotransferase subunit A from Streptococcus mutans serotype c (strain ATCC 700610 / UA159).